The primary structure comprises 285 residues: Cell division protein ZipA (285 aa).

Residue Met-1 is a topological domain, periplasmic. A helical transmembrane segment spans residues 2 to 22; it reads EIGLREWLIVIGIVVIGGILF. Residues 23 to 285 lie on the Cytoplasmic side of the membrane; the sequence is DGWRRMRGSK…FERRQLTHKR (263 aa). The segment at 49 to 88 is disordered; sequence AVSENSELLGPSRSVDFPQGAGFEPDEENLPSLSVRGPSR.

The protein belongs to the ZipA family. In terms of assembly, interacts with FtsZ via their C-terminal domains.

It is found in the cell inner membrane. Its function is as follows. Essential cell division protein that stabilizes the FtsZ protofilaments by cross-linking them and that serves as a cytoplasmic membrane anchor for the Z ring. Also required for the recruitment to the septal ring of downstream cell division proteins. This chain is Cell division protein ZipA, found in Azotobacter vinelandii (strain DJ / ATCC BAA-1303).